We begin with the raw amino-acid sequence, 315 residues long: Calcium homeostasis modulator protein 6 (315 aa).

The Cytoplasmic segment spans residues 1-21; that stretch reads MEKFRAVLDLHVKHHSALGYG. Residues 22-37 traverse the membrane as a helical segment; the sequence is LVTLLTAGGERIFSAV. Over 38 to 46 the chain is Extracellular; sequence AFQCPCSAA. 3 disulfides stabilise this stretch: cysteine 41–cysteine 126, cysteine 43–cysteine 155, and cysteine 139–cysteine 146. Residues 47-68 traverse the membrane as a helical segment; that stretch reads WNLPYGLVFLLVPALALFLLGY. Topologically, residues 69 to 102 are cytoplasmic; it reads VLSARTWRLLTGCCSSARASCGSALRGSLVCTQI. The helical transmembrane segment at 103–127 threads the bilayer; it reads SAAAALAPLTWVAVALLGGAFYECA. The Extracellular portion of the chain corresponds to 128-169; sequence ATGSAAFAQRLCLGRNRSCAAELPLVPCNQAKASDVQDLLKD. Residues 170-192 form a helical membrane-spanning segment; it reads LKAQSQVLGWILIAVVIIILLIF. Residues 193 to 315 lie on the Cytoplasmic side of the membrane; it reads TSVTRCLSPV…SSGINSTPEL (123 aa).

This sequence belongs to the CALHM family. As to quaternary structure, oligomerizes to form decameric and undecameric channels. N-glycosylated. As to expression, placenta.

It localises to the cell membrane. It carries out the reaction ATP(in) = ATP(out). Its function is as follows. Pore-forming subunit of an ATP-permeable channel. In response to pathogen-derived and proinflammatory stimuli, relocates from intracellular compartments to NK-dendritic cell and NK-macrophage immune synapses where it mediates ATP efflux and NK cell activation involved in antimicrobial and antitumor responses. May assemble to form gap junction channel-like structures with gating and ion conductance likely regulated by membrane lipids and voltage rather than by extracellular calcium levels. The sequence is that of Calcium homeostasis modulator protein 6 from Homo sapiens (Human).